The chain runs to 558 residues: Membrane protein insertase YidC (558 aa).

The next 5 helical transmembrane spans lie at 3–23, 364–384, 438–458, 477–497, and 508–528; these read IKRTVLWVIFFMSAVMLFDNW, FVGNWGWAIVLLTLLIKAVFF, LPVVIQIPVFISLYWVLLASV, PYFILPVLMAVSMFVQTKLNP, and MMFMPIAFSVMFFFFPAGLVL.

Belongs to the OXA1/ALB3/YidC family. Type 1 subfamily. As to quaternary structure, interacts with the Sec translocase complex via SecD. Specifically interacts with transmembrane segments of nascent integral membrane proteins during membrane integration.

The protein resides in the cell inner membrane. Functionally, required for the insertion and/or proper folding and/or complex formation of integral membrane proteins into the membrane. Involved in integration of membrane proteins that insert both dependently and independently of the Sec translocase complex, as well as at least some lipoproteins. Aids folding of multispanning membrane proteins. The protein is Membrane protein insertase YidC of Burkholderia pseudomallei (strain K96243).